Here is a 371-residue protein sequence, read N- to C-terminus: Flagellar P-ring protein (371 aa).

The signal sequence occupies residues 1 to 21 (MSRSFFATVLGLALAAMTVMA).

The protein belongs to the FlgI family. The basal body constitutes a major portion of the flagellar organelle and consists of four rings (L,P,S, and M) mounted on a central rod.

The protein localises to the periplasm. Its subcellular location is the bacterial flagellum basal body. Its function is as follows. Assembles around the rod to form the L-ring and probably protects the motor/basal body from shearing forces during rotation. In Caulobacter sp. (strain K31), this protein is Flagellar P-ring protein.